Here is a 274-residue protein sequence, read N- to C-terminus: Rhamnulose-1-phosphate aldolase (274 aa).

The active site involves E117. 3 residues coordinate Zn(2+): H141, H143, and H212.

This sequence belongs to the aldolase class II family. RhaD subfamily. In terms of assembly, homotetramer. Zn(2+) serves as cofactor.

Its subcellular location is the cytoplasm. The enzyme catalyses L-rhamnulose 1-phosphate = (S)-lactaldehyde + dihydroxyacetone phosphate. Its pathway is carbohydrate degradation; L-rhamnose degradation; glycerone phosphate from L-rhamnose: step 3/3. Its function is as follows. Catalyzes the reversible cleavage of L-rhamnulose-1-phosphate to dihydroxyacetone phosphate (DHAP) and L-lactaldehyde. The chain is Rhamnulose-1-phosphate aldolase from Pectobacterium atrosepticum (strain SCRI 1043 / ATCC BAA-672) (Erwinia carotovora subsp. atroseptica).